A 208-amino-acid polypeptide reads, in one-letter code: Histone H1t (208 aa).

Over residues 1 to 12 the composition is skewed to polar residues; it reads MSETAPAASSTL. The disordered stretch occupies residues 1 to 39; that stretch reads MSETAPAASSTLVPAPVEKPATKRRGKKPGMATARKPRG. A Phosphoserine modification is found at Ser-9. The region spanning 38–111 is the H15 domain; that stretch reads RGFSVSKLIP…GASGSFKLSK (74 aa). Arg-56 carries the citrulline modification. Residues 93 to 208 are disordered; the sequence is GVLVQTKGTG…TDLRKAAGRK (116 aa). Residues 121 to 134 are compositionally biased toward basic residues; sequence KGKKSASAKAKKLG. Ser-141 carries the post-translational modification Phosphoserine. The span at 143 to 154 shows a compositional bias: basic residues; it reads KSSKTKVVKKPK. Thr-156 carries the phosphothreonine modification. A phosphoserine mark is found at Ser-163, Ser-178, and Ser-187. Over residues 199 to 208 the composition is skewed to basic and acidic residues; it reads TDLRKAAGRK.

Belongs to the histone H1/H5 family. Phosphorylated in early spermatids. Post-translationally, citrullination at Arg-56 (H1R54ci) by PADI4 takes place within the DNA-binding site of H1 and results in its displacement from chromatin and global chromatin decondensation, thereby promoting pluripotency and stem cell maintenance. As to expression, testis-specific. Expressed in pachytene spermatocytes during meiotic prophase I.

It is found in the nucleus. Its subcellular location is the chromosome. Testis-specific histone H1 that forms less compacted chromatin compared to other H1 histone subtypes. Formation of more relaxed chromatin may be required to promote chromatin architecture required for proper chromosome regulation during meiosis, such as homologous recombination. Histones H1 act as linkers that bind to nucleosomes and compact polynucleosomes into a higher-order chromatin configuration. This Rattus norvegicus (Rat) protein is Histone H1t.